We begin with the raw amino-acid sequence, 273 residues long: 2,3,4,5-tetrahydropyridine-2,6-dicarboxylate N-succinyltransferase (273 aa).

Substrate contacts are provided by Arg104 and Asp141.

Belongs to the transferase hexapeptide repeat family. Homotrimer.

Its subcellular location is the cytoplasm. It carries out the reaction (S)-2,3,4,5-tetrahydrodipicolinate + succinyl-CoA + H2O = (S)-2-succinylamino-6-oxoheptanedioate + CoA. Its pathway is amino-acid biosynthesis; L-lysine biosynthesis via DAP pathway; LL-2,6-diaminopimelate from (S)-tetrahydrodipicolinate (succinylase route): step 1/3. The protein is 2,3,4,5-tetrahydropyridine-2,6-dicarboxylate N-succinyltransferase of Neisseria gonorrhoeae (strain ATCC 700825 / FA 1090).